Here is a 274-residue protein sequence, read N- to C-terminus: Undecaprenyl-diphosphatase (274 aa).

7 helical membrane-spanning segments follow: residues 4 to 24, 46 to 63, 82 to 102, 109 to 129, 184 to 204, 218 to 238, and 249 to 269; these read ILLLKALILGIVEGLTEFLPI, LFEIVIQSGAILAVVWEY, KFILNLFVAFLPLAILGLAFG, LFNPVTVASTFILGAFVILWA, ATEFSFFLAIPTLIVATFYQL, MWAVGFVAAFVSAFLCVRWLL, and FAWYRIAFGIVVLATWQFGWV.

This sequence belongs to the UppP family.

It localises to the cell inner membrane. It catalyses the reaction di-trans,octa-cis-undecaprenyl diphosphate + H2O = di-trans,octa-cis-undecaprenyl phosphate + phosphate + H(+). Its function is as follows. Catalyzes the dephosphorylation of undecaprenyl diphosphate (UPP). Confers resistance to bacitracin. In Dechloromonas aromatica (strain RCB), this protein is Undecaprenyl-diphosphatase.